The sequence spans 675 residues: NADH-ubiquinone oxidoreductase 75 kDa subunit (675 aa).

A 2Fe-2S ferredoxin-type domain is found at 2–80 (KNISFKVNDF…SMNIYTNTLK (79 aa)). The [2Fe-2S] cluster site is built by Cys36, Cys47, Cys50, and Cys64. The region spanning 80-119 (KVKKARESVLEFLLANHPLDCPICDQGGECDLQDQSVVFG) is the 4Fe-4S His(Cys)3-ligated-type domain. His96, Cys100, Cys103, Cys109, Cys148, Cys151, Cys154, and Cys198 together coordinate [4Fe-4S] cluster. Positions 217–273 (LKSYNSIDVLDSLHSNIRVDIRGTKIMRILPRVNSELNEDWITDKIRFSYDSFRRQR) constitute a 4Fe-4S Mo/W bis-MGD-type domain.

Belongs to the complex I 75 kDa subunit family. In terms of assembly, complex I is composed of about 30 different subunits. Requires [2Fe-2S] cluster as cofactor. It depends on [4Fe-4S] cluster as a cofactor.

It is found in the mitochondrion inner membrane. It catalyses the reaction a ubiquinone + NADH + 5 H(+)(in) = a ubiquinol + NAD(+) + 4 H(+)(out). Its function is as follows. Core subunit of the mitochondrial membrane respiratory chain NADH dehydrogenase (Complex I) that is believed to belong to the minimal assembly required for catalysis. Complex I functions in the transfer of electrons from NADH to the respiratory chain. The immediate electron acceptor for the enzyme is believed to be ubiquinone. This is the largest subunit of complex I and it is a component of the iron-sulfur (IP) fragment of the enzyme. It may form part of the active site crevice where NADH is oxidized. The protein is NADH-ubiquinone oxidoreductase 75 kDa subunit (NAD11) of Acanthamoeba castellanii (Amoeba).